Reading from the N-terminus, the 265-residue chain is uncharacterized protein (265 aa).

2 disordered regions span residues 21 to 53 and 78 to 133; these read TLTH…LGPH and HAPS…SSVS. Residues 90–101 show a composition bias toward acidic residues; sequence DDDDDDEDDDDS. Residues 114–123 are compositionally biased toward low complexity; sequence SSSSSSSPRV. 137–144 contacts ATP; that stretch reads AILHQGKS.

This is an uncharacterized protein from Saccharomyces cerevisiae (strain ATCC 204508 / S288c) (Baker's yeast).